Here is a 445-residue protein sequence, read N- to C-terminus: Glucose-6-phosphate isomerase 2 (445 aa).

Glu-285 serves as the catalytic Proton donor. Catalysis depends on residues His-306 and Lys-420.

This sequence belongs to the GPI family. Homodimer.

Its subcellular location is the cytoplasm. The catalysed reaction is alpha-D-glucose 6-phosphate = beta-D-fructose 6-phosphate. It participates in carbohydrate biosynthesis; gluconeogenesis. The protein operates within carbohydrate degradation; glycolysis; D-glyceraldehyde 3-phosphate and glycerone phosphate from D-glucose: step 2/4. Catalyzes the reversible isomerization of glucose-6-phosphate to fructose-6-phosphate. The sequence is that of Glucose-6-phosphate isomerase 2 from Geobacillus stearothermophilus (Bacillus stearothermophilus).